A 506-amino-acid chain; its full sequence is MTVQNVRVRVAPSPTGDPHVGTAYMALFNEVFARKYNGQMILRIEDTDQTRSRDDYEANIFSALKWCGIRWDEGPDVGGAYGPYRQSERTEIYKKYAEILLQTDCAYKCFATPQELQEMRAVASTLGYRGGYDRRYRYLSPEEVRQREEQGQPYTIRLKVPLTGESVFEDQCKGCVVFPWADVDDQVLVKSDGFPTYHFANVVDDHLMGITHVLRGEEWLSSTPKHLLLYEAFGWEPPQFFHMPLLLNPDGSKLSKRKNPTSIFYYRDAGYKKEAFMNFLTLMGYSMEGDEEIYSMQRLIEAFDPKRIGRSGAVFDIRKLDWMNKHYLNHEGSPESLLQELKGWLWNDEFLLKILPLCQSRITTLADFVGLTSFFFTAIPQYSKEELLPSSLKQEQAAVMLYSLVKYLEKKDLWEKDFFYQGSKWLAEAFQVHHKKAVIPLLYVAITGAKQGLPLFDSMELLGKARTRARLTYAQNLLGGVSKKVQQQVDKALQDQPLEDIRFLDF.

Positions proline 12 to threonine 22 match the 'HIGH' region motif. Positions lysine 253–arginine 257 match the 'KMSKS' region motif. Residue lysine 256 coordinates ATP.

This sequence belongs to the class-I aminoacyl-tRNA synthetase family. Glutamate--tRNA ligase type 1 subfamily. As to quaternary structure, monomer.

The protein localises to the cytoplasm. It catalyses the reaction tRNA(Glu) + L-glutamate + ATP = L-glutamyl-tRNA(Glu) + AMP + diphosphate. Its function is as follows. Catalyzes the attachment of glutamate to tRNA(Glu) in a two-step reaction: glutamate is first activated by ATP to form Glu-AMP and then transferred to the acceptor end of tRNA(Glu). This Chlamydia trachomatis serovar A (strain ATCC VR-571B / DSM 19440 / HAR-13) protein is Glutamate--tRNA ligase.